The following is a 121-amino-acid chain: C-X-C motif chemokine 11-6 (121 aa).

A signal peptide spans 1 to 20 (MKTLAAFLLLSCLIAGEVNG). Cystine bridges form between Cys-29–Cys-56 and Cys-31–Cys-73. The segment at 95–121 (QSVPHSTTTGTVKSSMTSSTSAPTAFK) is disordered. A compositionally biased stretch (low complexity) spans 100–115 (STTTGTVKSSMTSSTS).

This sequence belongs to the intercrine alpha (chemokine CxC) family.

The protein localises to the secreted. Functionally, ligand for cxcr3.2. Chemotactic for macrophages. In Danio rerio (Zebrafish), this protein is C-X-C motif chemokine 11-6.